The primary structure comprises 471 residues: Serine/threonine-protein kinase sid1 (471 aa).

One can recognise a Protein kinase domain in the interval 9 to 260 (YTLLRKLGSG…AKELLQHPFI (252 aa)). ATP is bound by residues 15-23 (LGSGSFGVV) and K38. The active-site Proton acceptor is D129.

Belongs to the protein kinase superfamily. STE Ser/Thr protein kinase family. STE20 subfamily. As to quaternary structure, interacts with cdc14.

It localises to the cytoplasm. Its subcellular location is the cytoskeleton. It is found in the microtubule organizing center. The protein localises to the spindle pole body. The catalysed reaction is L-seryl-[protein] + ATP = O-phospho-L-seryl-[protein] + ADP + H(+). The enzyme catalyses L-threonyl-[protein] + ATP = O-phospho-L-threonyl-[protein] + ADP + H(+). Functionally, has a role in the septation initiation network (SIN) required for cytokinesis. This Schizosaccharomyces pombe (strain 972 / ATCC 24843) (Fission yeast) protein is Serine/threonine-protein kinase sid1 (sid1).